Reading from the N-terminus, the 355-residue chain is Carbohydrate sulfotransferase 10 (355 aa).

Over 1–6 the chain is Cytoplasmic; sequence MHHRWL. A helical; Signal-anchor for type II membrane protein membrane pass occupies residues 7 to 27; sequence LLVACFWVLFMLMVASKLITL. The Lumenal segment spans residues 28–355; that stretch reads TMKDPEGYGN…FGYKEPTFLF (328 aa). 2 N-linked (GlcNAc...) asparagine glycosylation sites follow: asparagine 93 and asparagine 98. 3'-phosphoadenylyl sulfate is bound by residues 126-132 and 188-196; these read PKVGNTQ and RDPFERLIS. Residue asparagine 316 is glycosylated (N-linked (GlcNAc...) asparagine).

The protein belongs to the sulfotransferase 2 family.

The protein localises to the golgi apparatus membrane. Its function is as follows. Catalyzes the transfer of sulfate to position 3 of terminal glucuronic acid of both protein- and lipid-linked oligosaccharides. Participates in biosynthesis of HNK-1 carbohydrate structure, a sulfated glucuronyl-lactosaminyl residue carried by many neural recognition molecules. In Xenopus laevis (African clawed frog), this protein is Carbohydrate sulfotransferase 10 (chst10).